The chain runs to 319 residues: Putative ribose-phosphate pyrophosphokinase 2 (319 aa).

Residues 40-42 (DGE) and 99-100 (RQ) each bind ATP. His-133 lines the Mg(2+) pocket. Residues Asp-222 and 226-230 (NTGRT) contribute to the D-ribose 5-phosphate site.

It belongs to the ribose-phosphate pyrophosphokinase family. Class I subfamily. In terms of assembly, homohexamer. Requires Mg(2+) as cofactor.

It is found in the cytoplasm. It carries out the reaction D-ribose 5-phosphate + ATP = 5-phospho-alpha-D-ribose 1-diphosphate + AMP + H(+). The protein operates within metabolic intermediate biosynthesis; 5-phospho-alpha-D-ribose 1-diphosphate biosynthesis; 5-phospho-alpha-D-ribose 1-diphosphate from D-ribose 5-phosphate (route I): step 1/1. In terms of biological role, involved in the biosynthesis of the central metabolite phospho-alpha-D-ribosyl-1-pyrophosphate (PRPP) via the transfer of pyrophosphoryl group from ATP to 1-hydroxyl of ribose-5-phosphate (Rib-5-P). In Streptococcus pneumoniae serotype 4 (strain ATCC BAA-334 / TIGR4), this protein is Putative ribose-phosphate pyrophosphokinase 2.